A 434-amino-acid polypeptide reads, in one-letter code: CCA tRNA nucleotidyltransferase 1, mitochondrial (434 aa).

A mitochondrion-targeting transit peptide spans 1–41 (MLRCLYHWHRPVLNRRWSRLCLPKQYLFTMKLQSPEFQSLF). Residues Gly-64 and Arg-67 each contribute to the ATP site. CTP contacts are provided by Gly-64 and Arg-67. 2 residues coordinate Mg(2+): Asp-77 and Asp-79. 5 residues coordinate ATP: Arg-151, Asp-194, Arg-197, Arg-200, and Arg-203. CTP-binding residues include Arg-151, Asp-194, Arg-197, Arg-200, and Arg-203. Ser-400 is subject to Phosphoserine. Lys-402 carries the N6-acetyllysine modification.

This sequence belongs to the tRNA nucleotidyltransferase/poly(A) polymerase family. In terms of assembly, monomer, and homodimer; disulfide-linked. The cofactor is Mg(2+).

The protein resides in the mitochondrion. It localises to the cytoplasm. The protein localises to the nucleus. The catalysed reaction is a tRNA precursor + 2 CTP + ATP = a tRNA with a 3' CCA end + 3 diphosphate. It catalyses the reaction a tRNA with a 3' CCA end + 2 CTP + ATP = a tRNA with a 3' CCACCA end + 3 diphosphate. Functionally, nucleotidyltransferase that catalyzes the addition and repair of the essential 3'-terminal CCA sequence in tRNAs, which is necessary for the attachment of amino acids to the 3' terminus of tRNA molecules, using CTP and ATP as substrates. tRNA 3'-terminal CCA addition is required both for tRNA processing and repair. Promotes tRNA repair and recycling downstream of the ribosome-associated quality control (RQC) pathway by mediating addition of the tRNA 3'-terminal CCA following cleavage by ANKZF1 and repair by ELAC1. Also involved in tRNA surveillance by mediating tandem CCA addition to generate a CCACCA at the 3' terminus of unstable tRNAs and tRNA-like transcripts. While stable tRNAs receive only 3'-terminal CCA, unstable tRNAs beginning with GG are marked with CCACCA and rapidly degraded. The structural flexibility of RNA controls the choice between CCA versus CCACCA addition: following the first CCA addition cycle, nucleotide-binding to the active site triggers a clockwise screw motion, producing torque on the RNA. This ejects stable RNAs, whereas unstable RNAs are refolded while bound to the enzyme and subjected to a second CCA catalytic cycle. In terms of biological role, adds 2 C residues (CC-) to the 3' terminus of tRNA molecules instead of a complete CCA end as isoform 1 does (in vitro). The polypeptide is CCA tRNA nucleotidyltransferase 1, mitochondrial (Homo sapiens (Human)).